The following is a 505-amino-acid chain: Aspartyl/glutamyl-tRNA(Asn/Gln) amidotransferase subunit B (505 aa).

Residues 220-241 (NVSLRPRPAPGDPDAPFGTRSE) form a disordered region.

This sequence belongs to the GatB/GatE family. GatB subfamily. Heterotrimer of A, B and C subunits.

It catalyses the reaction L-glutamyl-tRNA(Gln) + L-glutamine + ATP + H2O = L-glutaminyl-tRNA(Gln) + L-glutamate + ADP + phosphate + H(+). The catalysed reaction is L-aspartyl-tRNA(Asn) + L-glutamine + ATP + H2O = L-asparaginyl-tRNA(Asn) + L-glutamate + ADP + phosphate + 2 H(+). Its function is as follows. Allows the formation of correctly charged Asn-tRNA(Asn) or Gln-tRNA(Gln) through the transamidation of misacylated Asp-tRNA(Asn) or Glu-tRNA(Gln) in organisms which lack either or both of asparaginyl-tRNA or glutaminyl-tRNA synthetases. The reaction takes place in the presence of glutamine and ATP through an activated phospho-Asp-tRNA(Asn) or phospho-Glu-tRNA(Gln). The chain is Aspartyl/glutamyl-tRNA(Asn/Gln) amidotransferase subunit B from Frankia casuarinae (strain DSM 45818 / CECT 9043 / HFP020203 / CcI3).